The primary structure comprises 152 residues: Deoxyuridine 5'-triphosphate nucleotidohydrolase (152 aa).

Residues 71–73 (RSG), N84, 88–90 (LID), and M98 each bind substrate.

Belongs to the dUTPase family. Mg(2+) is required as a cofactor.

The enzyme catalyses dUTP + H2O = dUMP + diphosphate + H(+). The protein operates within pyrimidine metabolism; dUMP biosynthesis; dUMP from dCTP (dUTP route): step 2/2. Its function is as follows. This enzyme is involved in nucleotide metabolism: it produces dUMP, the immediate precursor of thymidine nucleotides and it decreases the intracellular concentration of dUTP so that uracil cannot be incorporated into DNA. In Shewanella sediminis (strain HAW-EB3), this protein is Deoxyuridine 5'-triphosphate nucleotidohydrolase.